Consider the following 468-residue polypeptide: Putative proline/betaine transporter (468 aa).

The next 12 helical transmembrane spans lie at 20-42 (VFATGIGNAMEWFDFGVYAYTTA), 63-83 (FAALAIAFLLRPIGGIVFGII), 91-111 (VVLTTTIILMALSTLTIGVLP), 115-135 (MIGLWAPALLLLARILQGFST), 164-184 (IGTLSGYIAASIMIALLSFFL), 191-211 (AWGWRIPFILGLFLGLFGLYL), 246-266 (ILVCFVAVVFFNVTNYTVTAY), 284-304 (VLITCVMAVMIPLALFFGKLA), 312-332 (VFLIGTGGLTLLSIVAFSLLN), 336-356 (LPFIILGVFILGFFLSTYEAT), 376-396 (VTFNISVSLFGGTTPLVNSWL), and 403-423 (IYAPAYYLTAISIIGFIVIAV).

This sequence belongs to the major facilitator superfamily. Metabolite:H+ Symporter (MHS) family (TC 2.A.1.6) family.

It is found in the cell membrane. Functionally, may be a proton symporter involved in the uptake of osmolytes such as proline and glycine betaine. The chain is Putative proline/betaine transporter (proP) from Staphylococcus haemolyticus (strain JCSC1435).